A 353-amino-acid polypeptide reads, in one-letter code: Variable large protein 17 (353 aa).

The signal sequence occupies residues 1–18 (MRKRISAIIMTLFMVLVS). Cys19 carries the N-palmitoyl cysteine lipid modification. Residue Cys19 is the site of S-diacylglycerol cysteine attachment. Residues 332–353 (EDKSVEATNTAEATTSGQQAKN) form a disordered region. Polar residues predominate over residues 337-353 (EATNTAEATTSGQQAKN).

It belongs to the variable large protein (Vlp) family. Delta subfamily.

The protein resides in the cell outer membrane. The Vlp and Vsp proteins are antigenically distinct proteins, only one vlp or vsp gene is transcriptionally active at any one time. Switching between these genes is a mechanism of host immune response evasion. The chain is Variable large protein 17 from Borrelia hermsii.